A 720-amino-acid polypeptide reads, in one-letter code: Methionine--tRNA ligase (720 aa).

Residues 27–37 (PYANGQIHIGH) carry the 'HIGH' region motif. 4 residues coordinate Zn(2+): Cys-158, Cys-161, Cys-171, and Cys-174. Residues 348–352 (KMSKS) carry the 'KMSKS' region motif. Residue Lys-351 coordinates ATP. Residues 614-720 (DFAKIDLRIA…SGAKPGMRVK (107 aa)) form the tRNA-binding domain.

It belongs to the class-I aminoacyl-tRNA synthetase family. MetG type 1 subfamily. In terms of assembly, homodimer. Zn(2+) serves as cofactor.

The protein resides in the cytoplasm. It catalyses the reaction tRNA(Met) + L-methionine + ATP = L-methionyl-tRNA(Met) + AMP + diphosphate. Its function is as follows. Is required not only for elongation of protein synthesis but also for the initiation of all mRNA translation through initiator tRNA(fMet) aminoacylation. The protein is Methionine--tRNA ligase of Burkholderia lata (strain ATCC 17760 / DSM 23089 / LMG 22485 / NCIMB 9086 / R18194 / 383).